The following is a 319-amino-acid chain: Ester hydrolase C11orf54 homolog (319 aa).

Zn(2+)-binding residues include H270, H272, and H282.

In terms of assembly, monomer. Zn(2+) is required as a cofactor.

It localises to the nucleus. The protein resides in the cytoplasm. In terms of biological role, exhibits ester hydrolase activity on the substrate p-nitrophenyl acetate, in vitro. May regulate DNA damage and repair by regulating HIF1A degradation via chaperone-mediated autophagy (CMA). The chain is Ester hydrolase C11orf54 homolog from Danio rerio (Zebrafish).